The chain runs to 497 residues: MAKEKKRGFFSWLGFGQKEQTPEKETEVQNEQPVVEEIVQAQEPVKASEQAVEEQPQAHTEAEAETFAADVVEVTEQVAESEKAQPEAEVVAQPEPVVEETPEPVAIEREELPLPEDVNAEAVSPEEWQAEAETVEIVEAAEEEAAKEEITDEELETALAAEAAEEAVMVVPPAEEEQPVEEIAQEQEKPTKEGFFARLKRSLLKTKENLGSGFISLFRGKKIDDDLFEELEEQLLIADVGVETTRKIITNLTEGASRKQLRDAEALYGLLKEEMGEILAKVDEPLNVEGKAPFVILMVGVNGVGKTTTIGKLARQFEQQGKSVMLAAGDTFRAAAVEQLQVWGQRNNIPVIAQHTGADSASVIFDAIQAAKARNIDVLIADTAGRLQNKSHLMEELKKIVRVMKKLDVEAPHEVMLTIDASTGQNAVSQAKLFHEAVGLTGITLTKLDGTAKGGVIFSVADQFGIPIRYIGVGERIEDLRPFKADDFIEALFARED.

2 disordered regions span residues 1–63 (MAKE…TEAE) and 79–130 (AESE…EWQA). The segment covering 87–96 (EAEVVAQPEP) has biased composition (low complexity). GTP contacts are provided by residues 300–307 (GVNGVGKT), 382–386 (DTAGR), and 446–449 (TKLD).

The protein belongs to the GTP-binding SRP family. FtsY subfamily. In terms of assembly, part of the signal recognition particle protein translocation system, which is composed of SRP and FtsY. SRP is a ribonucleoprotein composed of Ffh and a 4.5S RNA molecule. Binds to SecY. Post-translationally, proteolytically cleaved. The cleavage may regulate function and subcellular location of FtsY. Full-length FtsY is found primarily associated with the membrane, while cleaved protein is predominantly present in the cytoplasm.

Its subcellular location is the cell inner membrane. The protein resides in the cytoplasm. It catalyses the reaction GTP + H2O = GDP + phosphate + H(+). Its activity is regulated as follows. Conformation of the Ffh-FtsY complex and regulation of its GTPase activity are modulated by the 4.5S RNA. Formation of the FfH-FtsY complex leads to a mutual stimulation of both GTPases. In terms of biological role, involved in targeting and insertion of nascent membrane proteins into the cytoplasmic membrane. Acts as a receptor for the complex formed by the signal recognition particle (SRP) and the ribosome-nascent chain (RNC). Interaction with SRP-RNC leads to the transfer of the RNC complex to the Sec translocase for insertion into the membrane, the hydrolysis of GTP by both Ffh and FtsY, and the dissociation of the SRP-FtsY complex into the individual components. The sequence is that of Signal recognition particle receptor FtsY from Escherichia coli (strain K12).